A 302-amino-acid chain; its full sequence is Protein translocase subunit SecF (302 aa).

6 consecutive transmembrane segments (helical) span residues 12-32 (FFIYLSIALILFSVIVIFVKG), 138-158 (YAWYAVIISLIVLLAYITIRF), 166-186 (AILALAHDVIITLGFYSLFGI), 190-210 (LTAIAAFLTLAGYSLNDTIVV), 249-269 (FLVVFMMFLLGGRSIASFAFG), and 272-292 (VGVIIGTYSSLYIASPIVIGM).

This sequence belongs to the SecD/SecF family. SecF subfamily. As to quaternary structure, forms a complex with SecD. Part of the essential Sec protein translocation apparatus which comprises SecA, SecYEG and auxiliary proteins SecDF. Other proteins may also be involved.

The protein localises to the cell inner membrane. Part of the Sec protein translocase complex. Interacts with the SecYEG preprotein conducting channel. SecDF uses the proton motive force (PMF) to complete protein translocation after the ATP-dependent function of SecA. The chain is Protein translocase subunit SecF from Petrotoga mobilis (strain DSM 10674 / SJ95).